Consider the following 291-residue polypeptide: MVWKKLGSRNFSSCPSGSIQWIWDVLGECAQDGWDEASVGLGLISILCFAASTFPQFIKAYKTGNMDQALSLWFLLGWIGGDSCNLIGSFLADQLPLQTYTAVYYVLADLVMLTLYFYYKFRTRPSLLSAPINSVLLFLMGMACATPLLSAAGPVAAPREAFRGRALLSVESGSKPFTRQEVIGFVIGSISSVLYLLSRLPQIRTNFLRKSTQGISYSLFALVMLGNTLYGLSVLLKNPEEGQSEGSYLLHHLPWLVGSLGVLLLDTIISIQFLVYRRSTAASELEPLLPS.

Residues 1-37 are Lumenal-facing; that stretch reads MVWKKLGSRNFSSCPSGSIQWIWDVLGECAQDGWDEA. Asn10 is a glycosylation site (N-linked (GlcNAc...) asparagine). The region spanning 34 to 100 is the PQ-loop 1 domain; that stretch reads WDEASVGLGL…LADQLPLQTY (67 aa). A helical membrane pass occupies residues 38–58; that stretch reads SVGLGLISILCFAASTFPQFI. At 59–71 the chain is on the cytoplasmic side; the sequence is KAYKTGNMDQALS. The chain crosses the membrane as a helical span at residues 72–92; it reads LWFLLGWIGGDSCNLIGSFLA. Topologically, residues 93–98 are lumenal; that stretch reads DQLPLQ. The chain crosses the membrane as a helical span at residues 99–119; the sequence is TYTAVYYVLADLVMLTLYFYY. Residues 120–134 are Cytoplasmic-facing; that stretch reads KFRTRPSLLSAPINS. The helical transmembrane segment at 135-155 threads the bilayer; it reads VLLFLMGMACATPLLSAAGPV. Residues 156–182 are Lumenal-facing; sequence AAPREAFRGRALLSVESGSKPFTRQEV. Residues 183–203 traverse the membrane as a helical segment; it reads IGFVIGSISSVLYLLSRLPQI. The PQ-loop 2 domain occupies 184-243; it reads GFVIGSISSVLYLLSRLPQIRTNFLRKSTQGISYSLFALVMLGNTLYGLSVLLKNPEEGQ. Residues 204–214 lie on the Cytoplasmic side of the membrane; sequence RTNFLRKSTQG. The helical transmembrane segment at 215 to 235 threads the bilayer; that stretch reads ISYSLFALVMLGNTLYGLSVL. Topologically, residues 236-254 are lumenal; the sequence is LKNPEEGQSEGSYLLHHLP. Residues 255–275 traverse the membrane as a helical segment; that stretch reads WLVGSLGVLLLDTIISIQFLV. Residues 276 to 291 are Cytoplasmic-facing; the sequence is YRRSTAASELEPLLPS. The Di-leucine motif motif lies at 288–289; that stretch reads LL.

It belongs to the laat-1 family.

The protein localises to the lysosome membrane. In terms of biological role, amino acid transporter that specifically mediates the pH-dependent export of the cationic amino acids arginine, histidine and lysine from lysosomes. The polypeptide is Lysosomal amino acid transporter 1 homolog (Homo sapiens (Human)).